The primary structure comprises 83 residues: Vitellogenesis-inhibiting hormone (83 aa).

3 disulfides stabilise this stretch: Cys-15–Cys-52, Cys-32–Cys-48, and Cys-35–Cys-61.

Found in the sinus glands of both male and female. Found also in the brain; the neuroendocrine structures of the protocerebrum.

It localises to the secreted. Functionally, inhibits secondary vitellogenesis in females. Has no hyperglycemic or molt-inhibiting activity. This is Vitellogenesis-inhibiting hormone from Armadillidium vulgare (Pillbug).